Here is a 63-residue protein sequence, read N- to C-terminus: Large ribosomal subunit protein bL28 (63 aa).

The segment covering 11 to 20 (GNNSGASVSH) has biased composition (polar residues). Positions 11–30 (GNNSGASVSHSNKKTKRKWK) are disordered. The span at 21-30 (SNKKTKRKWK) shows a compositional bias: basic residues.

Belongs to the bacterial ribosomal protein bL28 family.

The chain is Large ribosomal subunit protein bL28 from Natranaerobius thermophilus (strain ATCC BAA-1301 / DSM 18059 / JW/NM-WN-LF).